A 144-amino-acid chain; its full sequence is MADRLTQLQDAVNSLADQFCNAIGVLQQCGPPASFNNIQTAINKDQPANPTEEYAQLFAALIARTAKDIDVLIDSLPSEESTAALQAASLYKLEEENHEAATCLEDVVYRGDMLLEKIQSALADIAQSQLKTRSGTHSQSLPDS.

Belongs to the Mediator complex subunit 21 family. Interacts with PPARG. Component of the Mediator complex, which is composed of MED1, MED4, MED6, MED7, MED8, MED9, MED10, MED11, MED12, MED13, MED13L, MED14, MED15, MED16, MED17, MED18, MED19, MED20, MED21, MED22, MED23, MED24, MED25, MED26, MED27, MED29, MED30, MED31, CCNC, CDK8 and CDC2L6/CDK11. The MED12, MED13, CCNC and CDK8 subunits form a distinct module termed the CDK8 module. Mediator containing the CDK8 module is less active than Mediator lacking this module in supporting transcriptional activation. Individual preparations of the Mediator complex lacking one or more distinct subunits have been variously termed ARC, CRSP, DRIP, PC2, SMCC and TRAP. Interacts with THRA in a ligand-dependent fashion.

Its subcellular location is the nucleus. Component of the Mediator complex, a coactivator involved in the regulated transcription of nearly all RNA polymerase II-dependent genes. Mediator functions as a bridge to convey information from gene-specific regulatory proteins to the basal RNA polymerase II transcription machinery. Mediator is recruited to promoters by direct interactions with regulatory proteins and serves as a scaffold for the assembly of a functional preinitiation complex with RNA polymerase II and the general transcription factors. This Homo sapiens (Human) protein is Mediator of RNA polymerase II transcription subunit 21 (MED21).